We begin with the raw amino-acid sequence, 383 residues long: Subtelomeric hrmA-associated cluster protein AFUB_078970 (383 aa).

Disordered stretches follow at residues 118-145 and 249-318; these read NPVS…KDDD and QATQ…SARP. Low complexity predominate over residues 119 to 134; it reads PVSEVPESPPSTVKSS. The 47-residue stretch at 318 to 364 folds into the Myb-like domain; that stretch reads PYSAAEDDILQTLVARGLAWEEIEKEFGLRFAKRTMRSLQMRWSRKL.

Functionally, myb-like domain-containing protein; part of the subtelomeric hrmA-associated cluster (HAC) containing genes that alter the hyphal surface (such as reduced total chitin or increased beta-glucan exposure) and perturb inter-hyphal interactions within the developing biofilms, resulting in a loss of vertically aligned polarized growing filaments. Consequently, this hypoxia-typic morphotype (called H-MORPH) with altered biofilm architecture leads to increased hypoxia fitness, increased host inflammation, rapid disease progression, and mortality in a murine model of invasive aspergillosis. The sequence is that of Subtelomeric hrmA-associated cluster protein AFUB_078970 from Aspergillus fumigatus (strain CBS 144.89 / FGSC A1163 / CEA10) (Neosartorya fumigata).